Consider the following 421-residue polypeptide: E3 ubiquitin-protein ligase RMD5 (421 aa).

The CTLH domain occupies 176-236 (EFIEMGQIVH…QIVKHGNPVE (61 aa)). Residues 361-404 (CPVLKEETTTENPPYSLACHHIISKKALDRLSKNGTITFKCPYC) form an RING-Gid-type zinc finger.

This sequence belongs to the RMD5/GID2 family. Identified in the GID/CTLH complex. In the absence of stress, the complex exists as an inactive anticipatory complex (GID(Ant)), composed of VID30/GID1, the E3 ubiquitin-ligase RMD5/GID2, VID28/GID5, GID8, and the RING-like subunit FYV10/GID9, awaiting a substrate receptor to form the active E3 ligase complex. When cells are shifted to glucose-containing medium, the substrate receptor VID24/GID4 is induced and becomes part of the complex, named GID(SR4). Additionally, GID7 transforms the GID(SR4) E3 ligase core into a higher-order supramolecular assembly (Chelator-GID(SR4)) specifically tailored for FBP1 ubiquitination. Under osmotic or heat stress, the substrate receptor GID10 is induced and becomes part of the complex, named GID(SR10). Within the GID complex, interacts directly with GID8, FYV10/GID9 and VID28/GID5.

It is found in the cytoplasm. The enzyme catalyses S-ubiquitinyl-[E2 ubiquitin-conjugating enzyme]-L-cysteine + [acceptor protein]-L-lysine = [E2 ubiquitin-conjugating enzyme]-L-cysteine + N(6)-ubiquitinyl-[acceptor protein]-L-lysine.. It participates in protein modification; protein ubiquitination. Functionally, E3 ubiquitin-protein ligase component of the GID E3 ligase complex recruiting N termini and catalyzing ubiquitination of proteins targeted for degradation. GID E3 is regulated through assembly with interchangeable N-degron-binding substrate receptors induced by distinct environmental perturbations. Required for the adaptation to the presence of glucose in the growth medium; mediates in association with the substrate receptor VID24/GID4 the degradation of enzymes involved in gluconeogenesis when cells are shifted to glucose-containing medium. Required for proteasome-dependent catabolite degradation of fructose-1,6-bisphosphatase (FBP1), malate dehydrogenase (MDH2), and other gluconeogenic enzymes. The chain is E3 ubiquitin-protein ligase RMD5 from Saccharomyces cerevisiae (strain ATCC 204508 / S288c) (Baker's yeast).